A 128-amino-acid polypeptide reads, in one-letter code: Small ribosomal subunit protein bS6 (128 aa).

The protein belongs to the bacterial ribosomal protein bS6 family.

Functionally, binds together with bS18 to 16S ribosomal RNA. The polypeptide is Small ribosomal subunit protein bS6 (Leifsonia xyli subsp. xyli (strain CTCB07)).